We begin with the raw amino-acid sequence, 1510 residues long: MPPSFPSLPLPEAVAATAHAALLALAALLLLLRAARALASRCASCLKAPRRRGGPAVVVGDGAGGALAAATAGAWHRAVLASCAYALLSQVAVLSYEVAVAGSRVSARALLLPAVQAVSWAALLALALQARAVGWARFPALVRLWWVVSFALCVVIAYDDSRRLIGQGARAVDYAHMVANFASVPALGFLCLVGVMGSTGLELEFTEDGNGLHEPLLLGRQRREAEEELGCLRVTPYADAGILSLATLSWLSPLLSVGAQRPLELADIPLLAHKDRAKSCYKAMSAHYERQRLEYPGREPSLTWAILKSFWREAAVNGTFAAVNTIVSYVGPYLISYFVDYLSGNIAFPHEGYILASIFFVAKLLETLTARQWYLGVDIMGIHVKSGLTAMVYRKGLRLSNASRQSHTSGEIVNYMAVDVQRVGDYAWYFHDIWMLPLQIILALAILYKNVGIAMVSTLVATVLSIAASVPVAKLQEHYQDKLMASKDERMRKTSECLKNMRILKLQAWEDRYRLQLEEMRNVECRWLRWALYSQAAVTFVFWSSPIFVAVITFGTCILLGGQLTAGGVLSALATFRILQEPLRNFPDLISMMAQTRVSLDRLSHFLQQEELPDDATINVPQSSTDKAVDIKDGAFSWNPYTLTPTLSDIHLSVVRGMRVAVCGVIGSGKSSLLSSILGEIPKLCGHVRISGTAAYVPQTAWIQSGNIEENILFGSQMDRQRYKRVIAACCLKKDLELLQYGDQTVIGDRGINLSGGQKQRVQLARALYQDADIYLLDDPFSAVDAHTGSELFKEYILTALATKTVIYVTHQVEFLPAADLILVLKDGHITQAGKYDDLLQAGTDFNALVSAHKEAIETMDIFEDSDSDTVSSIPNKRLTPSISNIDNLKNKMCENGQPSNTRGIKEKKKKEERKKKRTVQEEERERGKVSSKVYLSYMGEAYKGTLIPLIILAQTMFQVLQIASNWWMAWANPQTEGDAPKTDSVVLLVVYMSLAFGSSLFVFMRSLLVATFGLAAAQKLFIKMLRCVFRAPMSFFDTTPSGRILNRVSVDQSVVDLDIAFRLGGFASTTIQLLGIVAVMSKVTWQVLILIVPMAVACMWMQRYYIASSRELTRILSVQKSPVIHLFSESIAGAATIRGFGQEKRFMKRNLYLLDCFARPLFSSLAAIEWLCLRMELLSTFVFAFCMAILVSFPPGTIEPSMAGLAVTYGLNLNARMSRWILSFCKLENRIISVERIYQYCRLPSEAPLIIENCRPPSSWPQNGNIELIDLKVRYKDDLPLVLHGVSCMFPGGKKIGIVGRTGSGKSTLIQALFRLIEPTGGKIIIDNIDISAIGLHDLRSRLSIIPQDPTLFEGTIRMNLDPLEECTDQEIWEALEKCQLGEVIRSKEEKLDSPVLENGDNWSVGQRQLIALGRALLKQAKILVLDEATASVDTATDNLIQKIIRSEFKDCTVCTIAHRIPTVIDSDLVLVLSDGKIAEFDTPQRLLEDKSSMFIQLVSEYSTRSSCI.

The next 12 membrane-spanning stretches (helical) occupy residues 12–32 (EAVAATAHAALLALAALLLLL), 55–75 (PAVVVGDGAGGALAAATAGAW), 78–98 (AVLASCAYALLSQVAVLSYEV), 109–129 (ALLLPAVQAVSWAALLALALQ), 138–158 (FPALVRLWWVVSFALCVVIAY), 177–197 (MVANFASVPALGFLCLVGVMG), 319–339 (TFAAVNTIVSYVGPYLISYFV), 342–362 (LSGNIAFPHEGYILASIFFVA), 373–393 (WYLGVDIMGIHVKSGLTAMVY), 427–447 (AWYFHDIWMLPLQIILALAIL), 453–473 (IAMVSTLVATVLSIAASVPVA), and 540–560 (FVFWSSPIFVAVITFGTCILL). An ABC transmembrane type-1 1 domain is found at 320 to 595 (FAAVNTIVSY…FPDLISMMAQ (276 aa)). Residues 629–852 (VDIKDGAFSW…GTDFNALVSA (224 aa)) enclose the ABC transporter 1 domain. An ATP-binding site is contributed by 664-671 (GVIGSGKS). The segment at 889 to 925 (LKNKMCENGQPSNTRGIKEKKKKEERKKKRTVQEEER) is disordered. The span at 906–918 (KEKKKKEERKKKR) shows a compositional bias: basic residues. 6 helical membrane passes run 945–965 (GTLIPLIILAQTMFQVLQIAS), 985–1005 (SVVLLVVYMSLAFGSSLFVFM), 1060–1082 (IAFRLGGFASTTIQLLGIVAVMS), 1086–1108 (WQVLILIVPMAVACMWMQRYYIA), 1154–1174 (LLDCFARPLFSSLAAIEWLCL), and 1179–1199 (LSTFVFAFCMAILVSFPPGTI). The ABC transmembrane type-1 2 domain maps to 950 to 1220 (LIILAQTMFQ…GLNLNARMSR (271 aa)). Positions 1267-1501 (IELIDLKVRY…KSSMFIQLVS (235 aa)) constitute an ABC transporter 2 domain. Residue 1301–1308 (GRTGSGKS) participates in ATP binding.

The protein belongs to the ABC transporter superfamily. ABCC family. Conjugate transporter (TC 3.A.1.208) subfamily. In terms of tissue distribution, expressed in roots, leaves, stalks, tassels, silks, developing seeds and developing embryos.

It localises to the membrane. Its function is as follows. ABC transporter that may affect phytic acid transport and compartmentalization. May function directly or indirectly in removing phytic acid from the cytosol or in vesicle trafficking. Required for phytic acid accumulation in developing seeds. Phytic acid is the primary storage form of phosphorus in cereal grains and other plant seeds. This Zea mays (Maize) protein is ABC transporter C family MRP4.